The sequence spans 785 residues: ATP-dependent 6-phosphofructokinase 1 (785 aa).

The N-terminal catalytic PFK domain 1 stretch occupies residues 1–389; sequence MATTHAPAEP…YHFAYKNTAT (389 aa). Residues glycine 23, 86 to 87, and 116 to 119 contribute to the ATP site; these read RS and GDGS. A Mg(2+)-binding site is contributed by aspartate 117. Substrate contacts are provided by residues 162–164, arginine 199, 206–208, glutamate 263, arginine 291, and 297–300; these read SID, MGR, and HTQR. Aspartate 164 acts as the Proton acceptor in catalysis. The segment at 390–403 is interdomain linker; sequence PDHPKLILPENKRM. The segment at 404 to 785 is C-terminal regulatory PFK domain 2; it reads RIAIIHVGAP…KTGWSCYENC (382 aa). Residues arginine 480, 537-541, arginine 575, 582-584, glutamate 642, arginine 668, 674-677, and arginine 749 each bind beta-D-fructose 2,6-bisphosphate; these read TISNN, QGG, and HFQQ.

The protein belongs to the phosphofructokinase type A (PFKA) family. ATP-dependent PFK group I subfamily. Eukaryotic two domain clade 'E' sub-subfamily. Homotetramer. Requires Mg(2+) as cofactor.

The protein localises to the cytoplasm. It catalyses the reaction beta-D-fructose 6-phosphate + ATP = beta-D-fructose 1,6-bisphosphate + ADP + H(+). It participates in carbohydrate degradation; glycolysis; D-glyceraldehyde 3-phosphate and glycerone phosphate from D-glucose: step 3/4. With respect to regulation, allosterically activated by ADP, AMP, or fructose 2,6-bisphosphate, and allosterically inhibited by ATP or citrate. Its function is as follows. Catalyzes the phosphorylation of D-fructose 6-phosphate to fructose 1,6-bisphosphate by ATP, the first committing step of glycolysis. This Aspergillus oryzae (strain ATCC 42149 / RIB 40) (Yellow koji mold) protein is ATP-dependent 6-phosphofructokinase 1 (pfkA).